Consider the following 267-residue polypeptide: 3-methyl-2-oxobutanoate hydroxymethyltransferase (267 aa).

2 residues coordinate Mg(2+): Asp-46 and Asp-85. 3-methyl-2-oxobutanoate-binding positions include 46-47, Asp-85, and Lys-115; that span reads DS. Glu-117 contacts Mg(2+). Glu-184 functions as the Proton acceptor in the catalytic mechanism.

Belongs to the PanB family. In terms of assembly, homodecamer; pentamer of dimers. It depends on Mg(2+) as a cofactor.

The protein resides in the cytoplasm. It catalyses the reaction 3-methyl-2-oxobutanoate + (6R)-5,10-methylene-5,6,7,8-tetrahydrofolate + H2O = 2-dehydropantoate + (6S)-5,6,7,8-tetrahydrofolate. Its pathway is cofactor biosynthesis; (R)-pantothenate biosynthesis; (R)-pantoate from 3-methyl-2-oxobutanoate: step 1/2. Its function is as follows. Catalyzes the reversible reaction in which hydroxymethyl group from 5,10-methylenetetrahydrofolate is transferred onto alpha-ketoisovalerate to form ketopantoate. This Geotalea daltonii (strain DSM 22248 / JCM 15807 / FRC-32) (Geobacter daltonii) protein is 3-methyl-2-oxobutanoate hydroxymethyltransferase.